Consider the following 122-residue polypeptide: Large ribosomal subunit protein uL18 (122 aa).

The protein belongs to the universal ribosomal protein uL18 family. As to quaternary structure, part of the 50S ribosomal subunit; part of the 5S rRNA/L5/L18/L25 subcomplex. Contacts the 5S and 23S rRNAs.

Its function is as follows. This is one of the proteins that bind and probably mediate the attachment of the 5S RNA into the large ribosomal subunit, where it forms part of the central protuberance. In Desulfatibacillum aliphaticivorans, this protein is Large ribosomal subunit protein uL18.